The following is a 135-amino-acid chain: Ig heavy chain V region XIG14 (135 aa).

The N-terminal stretch at 1 to 18 (DFIIFFIFMFFSPSCILS) is a signal peptide. Positions 20-128 (TLQESGPGTV…GYNFDYWGQG (109 aa)) constitute an Ig-like domain.

The protein is Ig heavy chain V region XIG14 of Xenopus laevis (African clawed frog).